The primary structure comprises 108 residues: ATP synthase peripheral stalk subunit F6, mitochondrial (108 aa).

The transit peptide at 1–32 (MTVQRIFRLSSVLRSAVSVHLRRNIGVTAVAF) directs the protein to the mitochondrion. N6-acetyllysine occurs at positions 41, 46, and 79. 2 positions are modified to N6-acetyllysine; alternate: Lys-84 and Lys-99. An N6-succinyllysine; alternate mark is found at Lys-84 and Lys-99. The residue at position 105 (Lys-105) is an N6-acetyllysine. Ser-108 carries the phosphoserine modification.

Belongs to the eukaryotic ATPase subunit F6 family. As to quaternary structure, component of the ATP synthase complex composed at least of ATP5F1A/subunit alpha, ATP5F1B/subunit beta, ATP5MC1/subunit c (homooctomer), MT-ATP6/subunit a, MT-ATP8/subunit 8, ATP5ME/subunit e, ATP5MF/subunit f, ATP5MG/subunit g, ATP5MK/subunit k, ATP5MJ/subunit j, ATP5F1C/subunit gamma, ATP5F1D/subunit delta, ATP5F1E/subunit epsilon, ATP5PF/subunit F6, ATP5PB/subunit b, ATP5PD/subunit d, ATP5PO/subunit OSCP. ATP synthase complex consists of a soluble F(1) head domain (subunits alpha(3) and beta(3)) - the catalytic core - and a membrane F(0) domain - the membrane proton channel (subunits c, a, 8, e, f, g, k and j). These two domains are linked by a central stalk (subunits gamma, delta, and epsilon) rotating inside the F1 region and a stationary peripheral stalk (subunits F6, b, d, and OSCP).

The protein resides in the mitochondrion. It localises to the mitochondrion inner membrane. In terms of biological role, subunit F6, of the mitochondrial membrane ATP synthase complex (F(1)F(0) ATP synthase or Complex V) that produces ATP from ADP in the presence of a proton gradient across the membrane which is generated by electron transport complexes of the respiratory chain. ATP synthase complex consist of a soluble F(1) head domain - the catalytic core - and a membrane F(1) domain - the membrane proton channel. These two domains are linked by a central stalk rotating inside the F(1) region and a stationary peripheral stalk. During catalysis, ATP synthesis in the catalytic domain of F(1) is coupled via a rotary mechanism of the central stalk subunits to proton translocation. In vivo, can only synthesize ATP although its ATP hydrolase activity can be activated artificially in vitro. Part of the complex F(0) domain. Part of the complex F(0) domain and the peripheric stalk, which acts as a stator to hold the catalytic alpha(3)beta(3) subcomplex and subunit a/ATP6 static relative to the rotary elements. This Rattus norvegicus (Rat) protein is ATP synthase peripheral stalk subunit F6, mitochondrial.